A 460-amino-acid polypeptide reads, in one-letter code: MATGKIVQVIGAVVDVEFPQDAVPRVYEALEVQNGNEVLVLEVQQQLGGGIVRTIAMGSSDGLRRGLDVKDLEHPIEVPVGKATLGRIMNVLGQPVDMKGDIGEEERWAIHRAAPSYEELSSSQELLETGIKVIDLMCPFAKGGKVGLFGGAGVGKTVNMMELIRNIAIEHSGYSVFAGVGERTREGNDFYHEMTDSNVIDKVSLVYGQMNEPPGNRLRVALTGLTMAEKFRDEGRDVLLFVDNIYRYTLAGTEVSALLGRMPSAVGYQPTLAEEMGVLQERITSTKTGSITSVQAVYVPADDLTDPSPATTFAHLDATVVLSRQIASLGIYPAVDPLDSTSRQLDPLVVGQEHYDTARGVQSILQRYQELKDIIAILGMDELSEEDKLVVARARKIQRFLSQPFFVAEVFTGSPGKYVALKDTIRGFKGIMEGEYDHLPEQAFYMVGSIDEAVEKAKKL.

150 to 157 contributes to the ATP binding site; the sequence is GGAGVGKT.

It belongs to the ATPase alpha/beta chains family. F-type ATPases have 2 components, CF(1) - the catalytic core - and CF(0) - the membrane proton channel. CF(1) has five subunits: alpha(3), beta(3), gamma(1), delta(1), epsilon(1). CF(0) has three main subunits: a(1), b(2) and c(9-12). The alpha and beta chains form an alternating ring which encloses part of the gamma chain. CF(1) is attached to CF(0) by a central stalk formed by the gamma and epsilon chains, while a peripheral stalk is formed by the delta and b chains.

The protein resides in the cell inner membrane. The enzyme catalyses ATP + H2O + 4 H(+)(in) = ADP + phosphate + 5 H(+)(out). Functionally, produces ATP from ADP in the presence of a proton gradient across the membrane. The catalytic sites are hosted primarily by the beta subunits. The chain is ATP synthase subunit beta from Klebsiella pneumoniae subsp. pneumoniae (strain ATCC 700721 / MGH 78578).